An 848-amino-acid polypeptide reads, in one-letter code: Trimethylamine-N-oxide reductase 1 (848 aa).

A signal peptide (tat-type signal) is located at residues 1–39 (MNNNDLFQASRRRFLAQLGGLTVAGMLGPSLLTSRRATA). Serine 191 serves as a coordination point for Mo-bis(molybdopterin guanine dinucleotide).

This sequence belongs to the prokaryotic molybdopterin-containing oxidoreductase family. In terms of assembly, interacts with the N-terminal domain of TorC. It depends on Mo-bis(molybdopterin guanine dinucleotide) as a cofactor. Predicted to be exported by the Tat system. The position of the signal peptide cleavage has not been experimentally proven.

It is found in the periplasm. The enzyme catalyses trimethylamine + 2 Fe(III)-[cytochrome c] + H2O = trimethylamine N-oxide + 2 Fe(II)-[cytochrome c] + 3 H(+). Reduces trimethylamine-N-oxide (TMAO) into trimethylamine; an anaerobic reaction coupled to energy-yielding reactions. This Escherichia coli O157:H7 protein is Trimethylamine-N-oxide reductase 1 (torA).